A 340-amino-acid chain; its full sequence is Guanine nucleotide-binding protein subunit beta-4 (340 aa).

N-acetylserine is present on S2. At S2 the chain carries Phosphoserine. WD repeat units follow at residues 53-92, 95-134, 141-179, 182-221, and 224-263; these read GHLAKIYAMHWGYDSRLLVSASQDGKLIIWDSYTTNKMHA, LRSSWVMTCAYAPSGNYVACGGLDNICSIYNLKTREGNVR, GHTGYLSCCRFLDDSQIVTSSGDTTCALWDIETAQQTTT, GHSGDVMSLSLSPDMRTFVSGACDASSKLWDIRDGMCRQS, and GHVSDINAVSFFPNGYAFATGSDDATCRLFDLRADQELLL. H266 bears the Phosphohistidine mark. WD repeat units lie at residues 268-307 and 310-339; these read NIICGITSVAFSKSGRLLLAGYDDFNCNVWDTLKGDRAGV and GHDNRVSCLGVTDDGMAVATGSWDSFLRIW.

The protein belongs to the WD repeat G protein beta family. As to quaternary structure, g proteins are composed of 3 units, alpha, beta and gamma. In terms of tissue distribution, strongly expressed in lung and placenta, whereas it is weakly expressed in brain and heart. Abundantly expressed in the axons and Schwann cells of peripheral nerves.

Its function is as follows. Guanine nucleotide-binding proteins (G proteins) are involved as a modulator or transducer in various transmembrane signaling systems. The beta and gamma chains are required for the GTPase activity, for replacement of GDP by GTP, and for G protein-effector interaction. This is Guanine nucleotide-binding protein subunit beta-4 (GNB4) from Homo sapiens (Human).